A 538-amino-acid polypeptide reads, in one-letter code: RNA-binding protein Ro60 (538 aa).

Methionine 1 carries the post-translational modification N-acetylmethionine. Phosphoserine is present on residues serine 4 and serine 19. The TROVE domain occupies 16–369 (VVNSEGGCVW…TFKTVEPTGK (354 aa)). The segment at 120–284 (RIPTHLFTFI…EMPLTALLRN (165 aa)) is RNA-binding. The residue at position 224 (lysine 224) is an N6-acetyllysine. The interval 361–538 (FKTVEPTGKR…VIRNFTLDVI (178 aa)) is VWFA-like domain. Residues serine 378, serine 380, and threonine 445 each coordinate a divalent metal cation.

This sequence belongs to the Ro 60 kDa family. As to quaternary structure, identified in a IGF2BP1-dependent mRNP granule complex containing untranslated mRNAs. Found in a complex with PUF60 and Y5 RNA. Interacts with RAB11FIP5. Highest in brain, followed by lung, muscle, kidney and heart. Lower levels are found in testis, liver and spleen.

Its subcellular location is the cytoplasm. Its function is as follows. RNA-binding protein that binds to misfolded non-coding RNAs, pre-5S rRNA, and several small cytoplasmic RNA molecules known as Y RNAs. May play roles in cilia formation and/or maintenance. In Mus musculus (Mouse), this protein is RNA-binding protein Ro60.